The following is a 513-amino-acid chain: GMP synthase [glutamine-hydrolyzing] (513 aa).

In terms of domain architecture, Glutamine amidotransferase type-1 spans 3-200; the sequence is SVLVLDFGSQ…LLNIAGITPD (198 aa). The Nucleophile role is filled by cysteine 80. Active-site residues include histidine 174 and glutamate 176. Residues 201 to 388 form the GMPS ATP-PPase domain; sequence WSSKSFIDHQ…LGIAEDILMR (188 aa). Residue 228-234 coordinates ATP; sequence SGGVDST.

Homodimer.

It catalyses the reaction XMP + L-glutamine + ATP + H2O = GMP + L-glutamate + AMP + diphosphate + 2 H(+). Its pathway is purine metabolism; GMP biosynthesis; GMP from XMP (L-Gln route): step 1/1. Its function is as follows. Catalyzes the synthesis of GMP from XMP. The polypeptide is GMP synthase [glutamine-hydrolyzing] (Chlorobium phaeovibrioides (strain DSM 265 / 1930) (Prosthecochloris vibrioformis (strain DSM 265))).